The following is a 617-amino-acid chain: Chaperone protein HscA homolog (617 aa).

The protein belongs to the heat shock protein 70 family.

Probable chaperone. Has a low intrinsic ATPase activity which is markedly stimulated by HscB. This is Chaperone protein HscA homolog from Vibrio vulnificus (strain CMCP6).